The chain runs to 315 residues: MGLTEGVFLILSGTQFTLGILVNCFIELVNGSSWFKTKRMSLSDFIITTLALLRIILLCIILTDSFLIEFSPNTHDSGIIMQIIDVSWTFTNHLSIWLATCLGVLYCLKIASFSHPTFLWLKWRVSRVMVWMLLGALLLSCGSTASLINEFKLYSVFRGIEATRNVTEHFRKKRSEYYLIHVLGTLWYLPPLIVSLASYSLLIFSLGRHTRQMLQNGTSSRDPTTEAHKRAIRIILSFFFLFLLYFLAFLIASFGNFLPKTKMAKMIGEVMTMFYPAGHSFILILGNSKLKQTFVVMLRCESGHLKPGSKGPIFS.

Residues 1–5 (MGLTE) lie on the Extracellular side of the membrane. A helical transmembrane segment spans residues 6 to 26 (GVFLILSGTQFTLGILVNCFI). Residues 27–41 (ELVNGSSWFKTKRMS) lie on the Cytoplasmic side of the membrane. Residues 42 to 62 (LSDFIITTLALLRIILLCIIL) traverse the membrane as a helical segment. At 63–93 (TDSFLIEFSPNTHDSGIIMQIIDVSWTFTNH) the chain is on the extracellular side. A helical membrane pass occupies residues 94 to 114 (LSIWLATCLGVLYCLKIASFS). The Cytoplasmic segment spans residues 115–127 (HPTFLWLKWRVSR). Residues 128–148 (VMVWMLLGALLLSCGSTASLI) form a helical membrane-spanning segment. Residues 149 to 185 (NEFKLYSVFRGIEATRNVTEHFRKKRSEYYLIHVLGT) lie on the Extracellular side of the membrane. Asn-165 carries an N-linked (GlcNAc...) asparagine glycan. The chain crosses the membrane as a helical span at residues 186-206 (LWYLPPLIVSLASYSLLIFSL). The Cytoplasmic segment spans residues 207–233 (GRHTRQMLQNGTSSRDPTTEAHKRAIR). The helical transmembrane segment at 234–254 (IILSFFFLFLLYFLAFLIASF) threads the bilayer. Residues 255–265 (GNFLPKTKMAK) are Extracellular-facing. A helical membrane pass occupies residues 266–286 (MIGEVMTMFYPAGHSFILILG). Residues 287–315 (NSKLKQTFVVMLRCESGHLKPGSKGPIFS) lie on the Cytoplasmic side of the membrane.

This sequence belongs to the G-protein coupled receptor T2R family.

It localises to the membrane. In terms of biological role, gustducin-coupled receptor implicated in the perception of bitter compounds in the oral cavity and the gastrointestinal tract. Signals through PLCB2 and the calcium-regulated cation channel TRPM5. The sequence is that of Taste receptor type 2 member 3 (TAS2R3) from Gorilla gorilla gorilla (Western lowland gorilla).